The primary structure comprises 192 residues: uncharacterized protein (192 aa).

Residues 1–24 form the signal peptide; it reads MSGVLSCVLRACACAGLCCWVCMG. A disordered region spans residues 140 to 192; that stretch reads RAGADEGAGGNAAGCPEDTRGFARSPGDLMGGMNGDLGDEGETGEGGDNGAGE.

This is an uncharacterized protein from Human herpesvirus 6A (strain Uganda-1102) (HHV-6 variant A).